The chain runs to 83 residues: NAD(P)H-quinone oxidoreductase subunit L (83 aa).

2 helical membrane passes run 15–35 (LFVL…VPLA) and 53–73 (LGVY…APFI).

Belongs to the complex I NdhL subunit family. In terms of assembly, NDH-1 can be composed of about 15 different subunits; different subcomplexes with different compositions have been identified which probably have different functions.

It is found in the cellular thylakoid membrane. The enzyme catalyses a plastoquinone + NADH + (n+1) H(+)(in) = a plastoquinol + NAD(+) + n H(+)(out). It catalyses the reaction a plastoquinone + NADPH + (n+1) H(+)(in) = a plastoquinol + NADP(+) + n H(+)(out). Its function is as follows. NDH-1 shuttles electrons from an unknown electron donor, via FMN and iron-sulfur (Fe-S) centers, to quinones in the respiratory and/or the photosynthetic chain. The immediate electron acceptor for the enzyme in this species is believed to be plastoquinone. Couples the redox reaction to proton translocation, and thus conserves the redox energy in a proton gradient. Cyanobacterial NDH-1 also plays a role in inorganic carbon-concentration. The sequence is that of NAD(P)H-quinone oxidoreductase subunit L from Synechococcus sp. (strain CC9902).